The primary structure comprises 292 residues: Outer membrane protein assembly factor BamD (292 aa).

The N-terminal stretch at 1-26 is a signal peptide; that stretch reads MIQRPTFFTPTHLLAMLLATFVLITG. A lipid anchor (N-palmitoyl cysteine) is attached at cysteine 27. Cysteine 27 carries the S-diacylglycerol cysteine lipid modification.

Belongs to the BamD family. Part of the Bam complex.

It localises to the cell outer membrane. Functionally, part of the outer membrane protein assembly complex, which is involved in assembly and insertion of beta-barrel proteins into the outer membrane. This Xylella fastidiosa (strain 9a5c) protein is Outer membrane protein assembly factor BamD.